Consider the following 1184-residue polypeptide: DNA-directed RNA polymerase subunit beta (1184 aa).

Positions 1160 to 1184 are disordered; the sequence is DDDFTNQNDAFNIVQPENAATEKTE.

It belongs to the RNA polymerase beta chain family. In terms of assembly, the RNAP catalytic core consists of 2 alpha, 1 beta, 1 beta' and 1 omega subunit. When a sigma factor is associated with the core the holoenzyme is formed, which can initiate transcription.

It carries out the reaction RNA(n) + a ribonucleoside 5'-triphosphate = RNA(n+1) + diphosphate. Its function is as follows. DNA-dependent RNA polymerase catalyzes the transcription of DNA into RNA using the four ribonucleoside triphosphates as substrates. This Listeria innocua serovar 6a (strain ATCC BAA-680 / CLIP 11262) protein is DNA-directed RNA polymerase subunit beta.